The chain runs to 459 residues: Cysteine--tRNA ligase (459 aa).

Residue cysteine 28 coordinates Zn(2+). Residues 30 to 40 (ITIYDLCHIGH) carry the 'HIGH' region motif. Zn(2+) is bound by residues cysteine 209, histidine 234, and glutamate 238. Residues 266-270 (KMSKS) carry the 'KMSKS' region motif. An ATP-binding site is contributed by lysine 269.

Belongs to the class-I aminoacyl-tRNA synthetase family. As to quaternary structure, monomer. It depends on Zn(2+) as a cofactor.

The protein resides in the cytoplasm. The catalysed reaction is tRNA(Cys) + L-cysteine + ATP = L-cysteinyl-tRNA(Cys) + AMP + diphosphate. This is Cysteine--tRNA ligase from Shewanella sediminis (strain HAW-EB3).